Reading from the N-terminus, the 169-residue chain is Gastrula zinc finger protein XlCGF62.1 (169 aa).

6 C2H2-type zinc fingers span residues 6 to 28 (FICTECGKCFSEKRTLKHHIRTH), 34 to 56 (FICTDCGKCFSFEICLNRHYKTH), 62 to 84 (FICTECGKSFSDKSRLRVHHRSH), 90 to 113 (FTCTDCGKCFSVKSILNHHRQAIH), 119 to 141 (FICTECGKGFASKHYLHGHKRTH), and 147 to 169 (FVCTECGKGFASNYYLHVHKRTH).

The protein belongs to the krueppel C2H2-type zinc-finger protein family.

The protein localises to the nucleus. May be involved in transcriptional regulation. In Xenopus laevis (African clawed frog), this protein is Gastrula zinc finger protein XlCGF62.1.